A 61-amino-acid polypeptide reads, in one-letter code: UPF0434 protein PFL_1779 (61 aa).

It belongs to the UPF0434 family.

This Pseudomonas fluorescens (strain ATCC BAA-477 / NRRL B-23932 / Pf-5) protein is UPF0434 protein PFL_1779.